Consider the following 152-residue polypeptide: Ribonuclease pancreatic gamma-type (152 aa).

A signal peptide spans 1–25; sequence MGLEKSLFLFSLLVLVLGWVQPSLG. The substrate site is built by Lys35 and Arg38. Residue His40 is the Proton acceptor of the active site. 4 disulfides stabilise this stretch: Cys54/Cys112, Cys68/Cys123, Cys86/Cys138, and Cys93/Cys100. Residues 69 to 73, Lys94, and Arg113 contribute to the substrate site; that span reads KSMNT. His147 serves as the catalytic Proton donor.

This sequence belongs to the pancreatic ribonuclease family. As to quaternary structure, monomer.

It is found in the secreted. It carries out the reaction an [RNA] containing cytidine + H2O = an [RNA]-3'-cytidine-3'-phosphate + a 5'-hydroxy-ribonucleotide-3'-[RNA].. The enzyme catalyses an [RNA] containing uridine + H2O = an [RNA]-3'-uridine-3'-phosphate + a 5'-hydroxy-ribonucleotide-3'-[RNA].. Endonuclease that catalyzes the cleavage of RNA on the 3' side of pyrimidine nucleotides. Acts on single-stranded and double-stranded RNA. The polypeptide is Ribonuclease pancreatic gamma-type (Rattus norvegicus (Rat)).